Here is a 201-residue protein sequence, read N- to C-terminus: MALKDLFSGFFVVEEEDDELEAPPEENEQQERQQPKQQAQSQNQFTEQPRNVNSERPRSIQSVPKKQSTRLQQSSGERKYQMNNTTSKNNARNVVNMNNQEQENYDFTQESSKMCLFEPRVFSDTQDIADELKNRRATLVNLQRIDKVSAKRIIDFLSGTVYAIGGDIQRVGSDIFLCTPDNVEVAGSITDQIENMEYQGE.

A disordered region spans residues 1–94; that stretch reads MALKDLFSGF…TTSKNNARNV (94 aa). Positions 13 to 28 are enriched in acidic residues; the sequence is VEEEDDELEAPPEENE. The segment covering 35–44 has biased composition (low complexity); sequence PKQQAQSQNQ. Over residues 59-88 the composition is skewed to polar residues; the sequence is SIQSVPKKQSTRLQQSSGERKYQMNNTTSK.

Belongs to the SepF family. In terms of assembly, homodimer. Interacts with FtsZ.

The protein resides in the cytoplasm. In terms of biological role, cell division protein that is part of the divisome complex and is recruited early to the Z-ring. Probably stimulates Z-ring formation, perhaps through the cross-linking of FtsZ protofilaments. Its function overlaps with FtsA. This chain is Cell division protein SepF, found in Staphylococcus saprophyticus subsp. saprophyticus (strain ATCC 15305 / DSM 20229 / NCIMB 8711 / NCTC 7292 / S-41).